A 100-amino-acid polypeptide reads, in one-letter code: Phosphoribosylformylglycinamidine synthase subunit PurS (100 aa).

Belongs to the PurS family. In terms of assembly, homodimer. Part of the FGAM synthase complex composed of 1 PurL, 1 PurQ and 2 PurS subunits.

It is found in the cytoplasm. It carries out the reaction N(2)-formyl-N(1)-(5-phospho-beta-D-ribosyl)glycinamide + L-glutamine + ATP + H2O = 2-formamido-N(1)-(5-O-phospho-beta-D-ribosyl)acetamidine + L-glutamate + ADP + phosphate + H(+). It functions in the pathway purine metabolism; IMP biosynthesis via de novo pathway; 5-amino-1-(5-phospho-D-ribosyl)imidazole from N(2)-formyl-N(1)-(5-phospho-D-ribosyl)glycinamide: step 1/2. In terms of biological role, part of the phosphoribosylformylglycinamidine synthase complex involved in the purines biosynthetic pathway. Catalyzes the ATP-dependent conversion of formylglycinamide ribonucleotide (FGAR) and glutamine to yield formylglycinamidine ribonucleotide (FGAM) and glutamate. The FGAM synthase complex is composed of three subunits. PurQ produces an ammonia molecule by converting glutamine to glutamate. PurL transfers the ammonia molecule to FGAR to form FGAM in an ATP-dependent manner. PurS interacts with PurQ and PurL and is thought to assist in the transfer of the ammonia molecule from PurQ to PurL. This Synechocystis sp. (strain ATCC 27184 / PCC 6803 / Kazusa) protein is Phosphoribosylformylglycinamidine synthase subunit PurS.